Reading from the N-terminus, the 188-residue chain is Phosphatidylinositol N-acetylglucosaminyltransferase subunit H (188 aa).

It belongs to the PIGH family. Component of the glycosylphosphatidylinositol-N-acetylglucosaminyltransferase (GPI-GnT) complex composed at least by PIGA, PIGC, PIGH, PIGP, PIGQ, PIGY and DPM2. Interacts with PIGQ.

It localises to the cytoplasm. It participates in glycolipid biosynthesis; glycosylphosphatidylinositol-anchor biosynthesis. In terms of biological role, part of the glycosylphosphatidylinositol-N-acetylglucosaminyltransferase (GPI-GnT) complex that catalyzes the transfer of N-acetylglucosamine from UDP-N-acetylglucosamine to phosphatidylinositol and participates in the first step of GPI biosynthesis. The sequence is that of Phosphatidylinositol N-acetylglucosaminyltransferase subunit H from Bos taurus (Bovine).